A 388-amino-acid chain; its full sequence is Chorismate synthase (388 aa).

Residues Arg-39 and Arg-45 each coordinate NADP(+). Residues 132–134 (RSS), 251–252 (NA), Gly-296, 311–315 (KPIPT), and Arg-337 each bind FMN.

The protein belongs to the chorismate synthase family. As to quaternary structure, homotetramer. The cofactor is FMNH2.

It catalyses the reaction 5-O-(1-carboxyvinyl)-3-phosphoshikimate = chorismate + phosphate. Its pathway is metabolic intermediate biosynthesis; chorismate biosynthesis; chorismate from D-erythrose 4-phosphate and phosphoenolpyruvate: step 7/7. Its function is as follows. Catalyzes the anti-1,4-elimination of the C-3 phosphate and the C-6 proR hydrogen from 5-enolpyruvylshikimate-3-phosphate (EPSP) to yield chorismate, which is the branch point compound that serves as the starting substrate for the three terminal pathways of aromatic amino acid biosynthesis. This reaction introduces a second double bond into the aromatic ring system. The sequence is that of Chorismate synthase from Staphylococcus carnosus (strain TM300).